We begin with the raw amino-acid sequence, 252 residues long: Enolase-phosphatase E1 (252 aa).

The Mg(2+) site is built by aspartate 14 and glutamate 16. Substrate-binding positions include 142–143 (SS) and lysine 176. Aspartate 201 contacts Mg(2+).

The protein belongs to the HAD-like hydrolase superfamily. MasA/MtnC family. In terms of assembly, monomer. Requires Mg(2+) as cofactor.

It is found in the cytoplasm. The protein resides in the nucleus. The enzyme catalyses 5-methylsulfanyl-2,3-dioxopentyl phosphate + H2O = 1,2-dihydroxy-5-(methylsulfanyl)pent-1-en-3-one + phosphate. It participates in amino-acid biosynthesis; L-methionine biosynthesis via salvage pathway; L-methionine from S-methyl-5-thio-alpha-D-ribose 1-phosphate: step 3/6. The protein operates within amino-acid biosynthesis; L-methionine biosynthesis via salvage pathway; L-methionine from S-methyl-5-thio-alpha-D-ribose 1-phosphate: step 4/6. In terms of biological role, bifunctional enzyme that catalyzes the enolization of 2,3-diketo-5-methylthiopentyl-1-phosphate (DK-MTP-1-P) into the intermediate 2-hydroxy-3-keto-5-methylthiopentenyl-1-phosphate (HK-MTPenyl-1-P), which is then dephosphorylated to form the acireductone 1,2-dihydroxy-3-keto-5-methylthiopentene (DHK-MTPene). In Drosophila ananassae (Fruit fly), this protein is Enolase-phosphatase E1.